The following is a 262-amino-acid chain: Putative dimethyl sulfoxide reductase iron-sulfur subunit B (262 aa).

4Fe-4S ferredoxin-type domains follow at residues 4–34, 62–93, and 94–123; these read YGLV…MGQF, LEMT…TRDD, and GIVE…FNWD. Residues cysteine 13, cysteine 16, cysteine 19, cysteine 23, cysteine 71, cysteine 74, cysteine 79, cysteine 83, cysteine 103, cysteine 106, cysteine 109, cysteine 113, cysteine 147, cysteine 150, cysteine 162, and cysteine 166 each coordinate [4Fe-4S] cluster. The tract at residues 209-262 is disordered; the sequence is NGEMSPGRPWKSKKLESELDDDEAAKAARRRSGSVENGYDVTPHVPAETAGGDD.

As to quaternary structure, probable multiprotein complex that likely consists of DmsA, DmsB and DmsC. [4Fe-4S] cluster serves as cofactor.

It localises to the cell membrane. Dimethyl sulfoxide (DMSO) reductase catalyzes the reduction of dimethyl sulfoxide (DMSO) to dimethyl sulfide (DMS) during anaerobic respiration; it can also use trimethylamine N-oxide (TMAO) as terminal electron acceptor. Subunit B is proposed to be involved in electron transfer. The sequence is that of Putative dimethyl sulfoxide reductase iron-sulfur subunit B (dmsB) from Halobacterium salinarum (strain ATCC 700922 / JCM 11081 / NRC-1) (Halobacterium halobium).